A 1124-amino-acid polypeptide reads, in one-letter code: EGF and laminin G domain-containing protein (1124 aa).

Residues 1 to 1055 (RTFVKKYSAS…KLQAEDDDKT (1055 aa)) are Extracellular-facing. Laminin G-like domains follow at residues 8-203 (SASR…NQKC) and 210-369 (PFTF…WSGC). Cystine bridges form between cysteine 167-cysteine 203, cysteine 342-cysteine 369, cysteine 375-cysteine 386, cysteine 380-cysteine 395, cysteine 397-cysteine 412, cysteine 761-cysteine 788, cysteine 792-cysteine 803, cysteine 797-cysteine 812, and cysteine 814-cysteine 824. The 43-residue stretch at 371-413 (ITDFCIFSPCLHGGECTQTGKTFSCGCSGTGYDKGPNSLSVCQ) folds into the EGF-like 1 domain. The Laminin G-like 3 domain occupies 621–788 (NTATFVNEDG…GEAVFVKSGC (168 aa)). Residues 789–825 (GAACENNSCKNHAKCLDNYNVYFCDCSKTPYYGYFCH) enclose the EGF-like 2 domain. Residues 1011 to 1047 (RATCGPEPKVPEIPTPRPVGQRADVSTPQGITTNPKL) are disordered. A compositionally biased stretch (polar residues) spans 1034–1046 (DVSTPQGITTNPK). A helical transmembrane segment spans residues 1056–1076 (AIIVVVVLILVLLLVVLILVI). Residues 1077-1124 (YWYWARHKGEYHTHEDDEELKATDPYIEPAAPRKLKGEEPEKKKEWYI) lie on the Cytoplasmic side of the membrane. The tract at residues 1090 to 1124 (HEDDEELKATDPYIEPAAPRKLKGEEPEKKKEWYI) is disordered. Residues 1111–1124 (LKGEEPEKKKEWYI) show a composition bias toward basic and acidic residues.

In terms of tissue distribution, component of the acid-insoluble organic matrix of the aragonitic skeleton (at protein level).

It is found in the membrane. The protein is EGF and laminin G domain-containing protein of Acropora millepora (Staghorn coral).